A 715-amino-acid polypeptide reads, in one-letter code: Fatty acid oxidation complex subunit alpha (715 aa).

The tract at residues 1–190 (MTTTSAFMLN…KAGLVDDVVP (190 aa)) is enoyl-CoA hydratase. The segment at 306–715 (GPLNSVGILG…WTNGETDQGN (410 aa)) is 3-hydroxyacyl-CoA dehydrogenase.

It in the N-terminal section; belongs to the enoyl-CoA hydratase/isomerase family. In the central section; belongs to the 3-hydroxyacyl-CoA dehydrogenase family. Heterotetramer of two alpha chains (FadJ) and two beta chains (FadI).

Its subcellular location is the cytoplasm. The enzyme catalyses a (3S)-3-hydroxyacyl-CoA = a (2E)-enoyl-CoA + H2O. The catalysed reaction is a 4-saturated-(3S)-3-hydroxyacyl-CoA = a (3E)-enoyl-CoA + H2O. It catalyses the reaction a (3S)-3-hydroxyacyl-CoA + NAD(+) = a 3-oxoacyl-CoA + NADH + H(+). It carries out the reaction (3S)-3-hydroxybutanoyl-CoA = (3R)-3-hydroxybutanoyl-CoA. Its pathway is lipid metabolism; fatty acid beta-oxidation. Functionally, catalyzes the formation of a hydroxyacyl-CoA by addition of water on enoyl-CoA. Also exhibits 3-hydroxyacyl-CoA epimerase and 3-hydroxyacyl-CoA dehydrogenase activities. The polypeptide is Fatty acid oxidation complex subunit alpha (Salmonella gallinarum (strain 287/91 / NCTC 13346)).